The primary structure comprises 413 residues: Glutaminase (413 aa).

The segment at 23–307 (GELADYIPEL…LSDDMGLHLM (285 aa)) is glutaminase. Substrate is bound by residues serine 65, asparagine 114, glutamate 160, asparagine 167, tyrosine 191, tyrosine 243, and valine 261. Positions 316 to 413 (AVRSITRDGD…SDGTICKERV (98 aa)) constitute an STAS domain.

Belongs to the glutaminase family. In terms of assembly, homotetramer.

The catalysed reaction is L-glutamine + H2O = L-glutamate + NH4(+). The sequence is that of Glutaminase (glsA) from Corynebacterium glutamicum (strain ATCC 13032 / DSM 20300 / JCM 1318 / BCRC 11384 / CCUG 27702 / LMG 3730 / NBRC 12168 / NCIMB 10025 / NRRL B-2784 / 534).